The following is a 283-amino-acid chain: Undecaprenyl-diphosphatase (283 aa).

7 consecutive transmembrane segments (helical) span residues 46-66, 95-115, 127-147, 154-174, 200-220, 227-247, and 259-279; these read PGVS…IAYF, VAMV…KFFW, VPSI…AECM, LGGV…LAVI, FSFL…LKSA, AGPL…WLAI, and TWIF…WWAF.

This sequence belongs to the UppP family.

Its subcellular location is the cell inner membrane. The catalysed reaction is di-trans,octa-cis-undecaprenyl diphosphate + H2O = di-trans,octa-cis-undecaprenyl phosphate + phosphate + H(+). Catalyzes the dephosphorylation of undecaprenyl diphosphate (UPP). Confers resistance to bacitracin. This Synechococcus sp. (strain CC9902) protein is Undecaprenyl-diphosphatase.